Reading from the N-terminus, the 156-residue chain is Sperm acrosome-associated protein 5 (156 aa).

A signal peptide spans 1-18 (MQVSGTIVVILMAANVEA). The C-type lysozyme domain occupies 19-147 (KIYERCDLAK…SEWLRGCHMN (129 aa)). Disulfide bonds link C24–C144, C48–C132, C82–C97, and C93–C111. The active site involves E53.

Belongs to the glycosyl hydrolase 22 family.

Its subcellular location is the secreted. It catalyses the reaction Hydrolysis of (1-&gt;4)-beta-linkages between N-acetylmuramic acid and N-acetyl-D-glucosamine residues in a peptidoglycan and between N-acetyl-D-glucosamine residues in chitodextrins.. The sequence is that of Sperm acrosome-associated protein 5 (SPACA5) from Bos taurus (Bovine).